Here is a 260-residue protein sequence, read N- to C-terminus: Hydroxyethylthiazole kinase (260 aa).

Residue M36 participates in substrate binding. R112 and T157 together coordinate ATP. Residue G184 participates in substrate binding.

Belongs to the Thz kinase family. The cofactor is Mg(2+).

The enzyme catalyses 5-(2-hydroxyethyl)-4-methylthiazole + ATP = 4-methyl-5-(2-phosphooxyethyl)-thiazole + ADP + H(+). It participates in cofactor biosynthesis; thiamine diphosphate biosynthesis; 4-methyl-5-(2-phosphoethyl)-thiazole from 5-(2-hydroxyethyl)-4-methylthiazole: step 1/1. In terms of biological role, catalyzes the phosphorylation of the hydroxyl group of 4-methyl-5-beta-hydroxyethylthiazole (THZ). This chain is Hydroxyethylthiazole kinase, found in Shouchella clausii (strain KSM-K16) (Alkalihalobacillus clausii).